Here is a 291-residue protein sequence, read N- to C-terminus: tRNA dimethylallyltransferase (291 aa).

9-16 (GTTASGKT) provides a ligand contact to ATP. Residue 11 to 16 (TASGKT) participates in substrate binding. An interaction with substrate tRNA region spans residues 34–37 (DSLC).

Belongs to the IPP transferase family. Monomer. Mg(2+) serves as cofactor.

It carries out the reaction adenosine(37) in tRNA + dimethylallyl diphosphate = N(6)-dimethylallyladenosine(37) in tRNA + diphosphate. In terms of biological role, catalyzes the transfer of a dimethylallyl group onto the adenine at position 37 in tRNAs that read codons beginning with uridine, leading to the formation of N6-(dimethylallyl)adenosine (i(6)A). This chain is tRNA dimethylallyltransferase, found in Campylobacter lari (strain RM2100 / D67 / ATCC BAA-1060).